We begin with the raw amino-acid sequence, 174 residues long: Ribosome maturation factor RimM (174 aa).

In terms of domain architecture, PRC barrel spans 98-172; sequence AGEYYYHQIV…VVTVELMEGL (75 aa).

Belongs to the RimM family. Binds ribosomal protein uS19.

Its subcellular location is the cytoplasm. In terms of biological role, an accessory protein needed during the final step in the assembly of 30S ribosomal subunit, possibly for assembly of the head region. Essential for efficient processing of 16S rRNA. May be needed both before and after RbfA during the maturation of 16S rRNA. It has affinity for free ribosomal 30S subunits but not for 70S ribosomes. This is Ribosome maturation factor RimM from Lactiplantibacillus plantarum (strain ATCC BAA-793 / NCIMB 8826 / WCFS1) (Lactobacillus plantarum).